The sequence spans 336 residues: Ferrochelatase (336 aa).

His-206 and Glu-287 together coordinate Fe cation.

It belongs to the ferrochelatase family.

The protein localises to the cytoplasm. It catalyses the reaction heme b + 2 H(+) = protoporphyrin IX + Fe(2+). Its pathway is porphyrin-containing compound metabolism; protoheme biosynthesis; protoheme from protoporphyrin-IX: step 1/1. Its function is as follows. Catalyzes the ferrous insertion into protoporphyrin IX. In Neisseria gonorrhoeae (strain ATCC 700825 / FA 1090), this protein is Ferrochelatase.